The chain runs to 240 residues: Pyridoxine 5'-phosphate synthase (240 aa).

Residue Asn7 coordinates 3-amino-2-oxopropyl phosphate. Residue 9–10 participates in 1-deoxy-D-xylulose 5-phosphate binding; the sequence is DH. A 3-amino-2-oxopropyl phosphate-binding site is contributed by Arg18. His43 acts as the Proton acceptor in catalysis. Positions 45 and 50 each coordinate 1-deoxy-D-xylulose 5-phosphate. Catalysis depends on Glu70, which acts as the Proton acceptor. Thr100 is a binding site for 1-deoxy-D-xylulose 5-phosphate. The active-site Proton donor is His191. Residues Gly192 and 213–214 each bind 3-amino-2-oxopropyl phosphate; that span reads GH.

Belongs to the PNP synthase family. Homooctamer; tetramer of dimers.

It is found in the cytoplasm. It carries out the reaction 3-amino-2-oxopropyl phosphate + 1-deoxy-D-xylulose 5-phosphate = pyridoxine 5'-phosphate + phosphate + 2 H2O + H(+). It functions in the pathway cofactor biosynthesis; pyridoxine 5'-phosphate biosynthesis; pyridoxine 5'-phosphate from D-erythrose 4-phosphate: step 5/5. Its function is as follows. Catalyzes the complicated ring closure reaction between the two acyclic compounds 1-deoxy-D-xylulose-5-phosphate (DXP) and 3-amino-2-oxopropyl phosphate (1-amino-acetone-3-phosphate or AAP) to form pyridoxine 5'-phosphate (PNP) and inorganic phosphate. This Microcystis aeruginosa (strain NIES-843 / IAM M-2473) protein is Pyridoxine 5'-phosphate synthase.